The primary structure comprises 214 residues: Serine protease inhibitor 2.1 (214 aa).

It belongs to the serpin family.

This is Serine protease inhibitor 2.1 from Rattus norvegicus (Rat).